Here is a 112-residue protein sequence, read N- to C-terminus: uncharacterized protein (112 aa).

Residues C39, C105, and C107 each coordinate Fe cation.

It belongs to the HesB/IscA family. Ycf83 subfamily.

Its subcellular location is the plastid. The protein resides in the chloroplast. This is an uncharacterized protein from Galdieria sulphuraria (Red alga).